The primary structure comprises 206 residues: Large ribosomal subunit protein uL4 (206 aa).

The tract at residues Thr-48 to Tyr-97 is disordered. Basic residues predominate over residues Lys-63–Arg-72.

It belongs to the universal ribosomal protein uL4 family. Part of the 50S ribosomal subunit.

Functionally, one of the primary rRNA binding proteins, this protein initially binds near the 5'-end of the 23S rRNA. It is important during the early stages of 50S assembly. It makes multiple contacts with different domains of the 23S rRNA in the assembled 50S subunit and ribosome. Its function is as follows. Forms part of the polypeptide exit tunnel. In Anaeromyxobacter dehalogenans (strain 2CP-1 / ATCC BAA-258), this protein is Large ribosomal subunit protein uL4.